The sequence spans 770 residues: Arf-GAP with coiled-coil, ANK repeat and PH domain-containing protein 2 (770 aa).

The 226-residue stretch at 1–226 (MKMTVDFEEC…MKDLGAQLDR (226 aa)) folds into the BAR domain. The PH domain occupies 266-361 (GIVMEGYLFK…WIKAVQTSIA (96 aa)). Positions 371 to 391 (SEKLDKKSSPSTGSLDSGNES) are disordered. Residues 379–388 (SPSTGSLDSG) are compositionally biased toward polar residues. Serine 384 and serine 387 each carry phosphoserine. Residues 399–520 (ESALQRVQCI…KFVDKYSALL (122 aa)) form the Arf-GAP domain. Residues 414-437 (CCDCGLADPRWASINLGITLCIEC) form a C4-type zinc finger. Serine 521 is subject to Phosphoserine. The tract at residues 542–572 (ARASVHTPVKSNDSGIQQCSEDGRESLPSTV) is disordered. The span at 550 to 561 (VKSNDSGIQQCS) shows a compositional bias: polar residues. Serine 573 and serine 576 each carry phosphoserine. ANK repeat units follow at residues 632–661 (NQAT…NVNQ), 665–694 (QGRG…NQHA), and 698–727 (EGKD…NEEM). At tyrosine 734 the chain carries Phosphotyrosine. Serine 767 is modified (phosphoserine).

In terms of assembly, interacts with RAB35 (GTP-bound form); the interaction is direct and probably recruits ACAP2 to membranes. Interacts with MICALL1; the interaction is indirect through RAB35.

It localises to the endosome membrane. The protein resides in the cell membrane. GAP activity stimulated by phosphatidylinositol 4,5-bisphosphate (PIP2) and phosphatidic acid. GTPase-activating protein (GAP) for ADP ribosylation factor 6 (ARF6). Doesn't show GAP activity for RAB35. The chain is Arf-GAP with coiled-coil, ANK repeat and PH domain-containing protein 2 (Acap2) from Mus musculus (Mouse).